A 239-amino-acid polypeptide reads, in one-letter code: DNA repair protein RecO (239 aa).

This sequence belongs to the RecO family.

Its function is as follows. Involved in DNA repair and RecF pathway recombination. In Cereibacter sphaeroides (strain KD131 / KCTC 12085) (Rhodobacter sphaeroides), this protein is DNA repair protein RecO.